The sequence spans 438 residues: AP-2 complex subunit mu (438 aa).

Residues 177-437 (KNEVFLDIVE…ITKAGSYEIR (261 aa)) form the MHD domain.

This sequence belongs to the adaptor complexes medium subunit family. As to quaternary structure, adaptor protein complex 2 (AP-2) is a heterotetramer composed of two large adaptins (alpha-type and beta-type subunits), a medium adaptin (mu-type subunit) and a small adaptin (sigma-type subunit).

It localises to the cell membrane. Its subcellular location is the membrane. The protein resides in the coated pit. It is found in the golgi apparatus. The protein localises to the trans-Golgi network membrane. Subunit of the adaptor protein complex 2 (AP-2). Adaptor protein complexes function in protein transport via transport vesicles in different membrane traffic pathways. Adaptor protein complexes are vesicle coat components and appear to be involved in cargo selection and vesicle formation. AP-2 is involved in clathrin-dependent endocytosis in which cargo proteins are incorporated into vesicles surrounded by clathrin (clathrin-coated vesicles, CCVs) which are destined for fusion with the early endosome. AP-2 recognizes Y-X-X-Phi endocytosis signal motif within the cytosolic tails of transmembrane cargo molecules. The complex binds polyphosphoinositides. The polypeptide is AP-2 complex subunit mu (AP2M) (Arabidopsis thaliana (Mouse-ear cress)).